Reading from the N-terminus, the 515-residue chain is Bifunctional purine biosynthesis protein PurH (515 aa).

The 145-residue stretch at 1–145 folds into the MGS-like domain; the sequence is MTKRALISVS…KNHASVTVVV (145 aa).

Belongs to the PurH family.

It carries out the reaction (6R)-10-formyltetrahydrofolate + 5-amino-1-(5-phospho-beta-D-ribosyl)imidazole-4-carboxamide = 5-formamido-1-(5-phospho-D-ribosyl)imidazole-4-carboxamide + (6S)-5,6,7,8-tetrahydrofolate. The catalysed reaction is IMP + H2O = 5-formamido-1-(5-phospho-D-ribosyl)imidazole-4-carboxamide. It functions in the pathway purine metabolism; IMP biosynthesis via de novo pathway; 5-formamido-1-(5-phospho-D-ribosyl)imidazole-4-carboxamide from 5-amino-1-(5-phospho-D-ribosyl)imidazole-4-carboxamide (10-formyl THF route): step 1/1. The protein operates within purine metabolism; IMP biosynthesis via de novo pathway; IMP from 5-formamido-1-(5-phospho-D-ribosyl)imidazole-4-carboxamide: step 1/1. The chain is Bifunctional purine biosynthesis protein PurH from Streptococcus uberis (strain ATCC BAA-854 / 0140J).